The following is a 276-amino-acid chain: uncharacterized protein (276 aa).

10 helical membrane-spanning segments follow: residues 5–25 (IVLA…KYSV), 31–51 (IAIA…IIIL), 63–83 (VFAL…LGEV), 89–109 (VASV…AIFL), 119–139 (VGII…YANI), 142–162 (IALV…GKSL), 168–188 (PITL…PFLP), 200–220 (LIGS…LGWY), 231–251 (ASVF…ILLA), and 253–273 (PLTL…YIVV). 2 consecutive EamA domains span residues 12 to 133 (TFWG…VISE) and 150 to 274 (VAAA…IVVR).

It belongs to the EamA transporter family.

The protein resides in the cell membrane. This is an uncharacterized protein from Archaeoglobus fulgidus (strain ATCC 49558 / DSM 4304 / JCM 9628 / NBRC 100126 / VC-16).